A 2748-amino-acid polypeptide reads, in one-letter code: Chalcone synthase cfoA (2748 aa).

Residues 13–511 (RHAGESCEKV…DTVPRTVIGK (499 aa)) are adenylation (A) domain. The Carrier 1 domain maps to 535-620 (DLIEALVMAE…AVSTYLHGRL (86 aa)). Serine 579 carries the post-translational modification O-(pantetheine 4'-phosphoryl)serine. Residues 641–1073 (VEPIAIVSMA…GTNSHIILEQ (433 aa)) enclose the Ketosynthase family 3 (KS3) domain. Active-site for beta-ketoacyl synthase activity residues include cysteine 813, histidine 948, and histidine 995. The region spanning 1196–1489 (FSGQGSWMPT…ATHGTVDKLL (294 aa)) is the Malonyl-CoA:ACP transacylase (MAT) domain. The dehydratase (DH) domain stretch occupies residues 1561 to 1842 (LGHEMIFNAT…ENSFSMTMTD (282 aa)). An N-terminal hotdog fold region spans residues 1563 to 1707 (HEMIFNATSI…GTFQLISQPN (145 aa)). Residues 1563 to 1866 (HEMIFNATSI…LRTWQPTVAG (304 aa)) form the PKS/mFAS DH domain. Histidine 1595 acts as the Proton acceptor; for dehydratase activity in catalysis. A C-terminal hotdog fold region spans residues 1722–1866 (AESDVNISEA…LRTWQPTVAG (145 aa)). The active-site Proton donor; for dehydratase activity is aspartate 1784. The region spanning 2031–2210 (GTVLITGGTG…ALSLAWGPWA (180 aa)) is the Ketoreductase (KR) domain. The Carrier 2 domain occupies 2305–2383 (NRHDTLLGLV…ALVEYLLPRI (79 aa)). O-(pantetheine 4'-phosphoryl)serine is present on serine 2342. Residues 2386-2426 (EPQPEVDTDSDASTTAGDTSVSRDSGKEDELSPSSSVTTLA) are disordered. Over residues 2396 to 2407 (DASTTAGDTSVS) the composition is skewed to low complexity. A thioester reductase (TE) domain region spans residues 2519-2742 (VGLSVYSNLA…GAAGEIERWA (224 aa)).

In the N-terminal section; belongs to the NRP synthetase family. Pantetheine 4'-phosphate is required as a cofactor.

The protein operates within secondary metabolite biosynthesis; flavonoid biosynthesis. Its function is as follows. Hybrid PKS-NRPS synthetase; part of the gene cluster that mediates the biosynthesis of chlorflavonin, a fungal flavonoid with acetolactate synthase inhibitory activity. Within the pathway, the PKS-NRPS cfoA, is responsible for the generation of the key precursor chalcone. The adenylation (A) domain activates benzoic acid or p-hydroxybenzoic acid which are transferred to the thiol group of the pantetheinyl residue of the T domain, and further transferred to the adjacent PKS portion of cfoA. Within the PKS portion of cfoA, benzoic acid or p-hydroxybenzoic acid act as starter units for respectively four malonyl-CoA molecules for elongation by the AT and KS domains. Afterwards, chalcone is cyclized through Claisen condensation and thereby released either spontaneously or catalyzed by the TE domain. Then, a new type of chalcone isomerase, cfoK, catalyzes the conversion of the chalcone into a flavanone by a histidine-mediated oxa-Michael addition mechanism. The desaturation of flavanone to flavone is catalyzed by a new type of flavone synthase, the flavin mononucleotide (FMN)-dependent oxidoreductase cfoJ. Monooxygenases cfoF, cfoG, and P450 cfoH are responsible for the hydroxylation of the flavonoid skeleton at sites C3, C8, and C2', respectively. Like cfoF, the dehydratase cfoI plays also a role in the hydroxylation of position C3. Methyltransferases cfoB, cfoC, and cfoD then catalyze the methylation of C7-OH, C8-OH, and C3-OH, respectively. Finally, the monooxygenase cfoE is responsible for the chlorination of flavonoid at position C3'. This Aspergillus candidus protein is Chalcone synthase cfoA.